A 321-amino-acid chain; its full sequence is tRNA(Ile)-lysidine synthase (321 aa).

Position 21-26 (21-26 (SYGSDS)) interacts with ATP.

The protein belongs to the tRNA(Ile)-lysidine synthase family.

Its subcellular location is the cytoplasm. The catalysed reaction is cytidine(34) in tRNA(Ile2) + L-lysine + ATP = lysidine(34) in tRNA(Ile2) + AMP + diphosphate + H(+). Its function is as follows. Ligates lysine onto the cytidine present at position 34 of the AUA codon-specific tRNA(Ile) that contains the anticodon CAU, in an ATP-dependent manner. Cytidine is converted to lysidine, thus changing the amino acid specificity of the tRNA from methionine to isoleucine. The sequence is that of tRNA(Ile)-lysidine synthase from Campylobacter jejuni (strain RM1221).